A 947-amino-acid chain; its full sequence is Protein NLP8 (947 aa).

3 disordered regions span residues 114 to 135 (RSSA…ELSG), 509 to 533 (STKK…TTSS), and 550 to 591 (SMFS…EKNV). The span at 126–135 (RSSDSDELSG) shows a compositional bias: basic and acidic residues. 2 stretches are compositionally biased toward polar residues: residues 522-533 (SDMSNFPQTTSS) and 550-572 (SMFS…TLEQ). Over residues 573-587 (DVSKARTPEKKKSTT) the composition is skewed to basic and acidic residues. One can recognise an RWP-RK domain in the interval 577–671 (ARTPEKKKST…LDSVQGVEGG (95 aa)). Positions 646-666 (RKINKVNRSLRKIQTVLDSVQ) form a coiled coil. The segment covering 805-815 (SCSISDSSNGS) has biased composition (low complexity). Residues 805–828 (SCSISDSSNGSGAVLRGSSSTSME) form a disordered region. Residues 847-929 (TLIVKASYRE…HSVKFLVRDL (83 aa)) enclose the PB1 domain.

Its subcellular location is the nucleus. Its function is as follows. Probable transcription factor. The sequence is that of Protein NLP8 (NLP8) from Arabidopsis thaliana (Mouse-ear cress).